Reading from the N-terminus, the 365-residue chain is MREETPEHPAPLRSGYTTGSCATATSLAAARLLLAGVVSEVAEILLPKGQHVPMPLVFCRLIGNGDEGAEAGTVKDAGDDPDVTHGAVVFARVRLVAEPGVIFRAGPGVGTVTRAGLTLPVGEPAINPVPRRMMTEHLAELAAEHAYGGGFEVTIGVEGGEALALKTMNPRLGILGGLSILGTTGIVRPFSCSAYIASIHQGIDVARANGYTHLAACTGNASEDAMRAHYGLPDIALIEMGDFVGAVLKHMKRAPVERLSVCGGFGKLSKLAAGHLDLHSRNSSIDLERLAQWAAEQGADDALQASIRAANTSQQAVALAHAQQVPLGDIVCRHALAVAREIVPPQVNVEMFAIDRRGLLIGAAQ.

The protein belongs to the CbiD family.

The catalysed reaction is Co-precorrin-5B + S-adenosyl-L-methionine = Co-precorrin-6A + S-adenosyl-L-homocysteine. Its pathway is cofactor biosynthesis; adenosylcobalamin biosynthesis; cob(II)yrinate a,c-diamide from sirohydrochlorin (anaerobic route): step 6/10. In terms of biological role, catalyzes the methylation of C-1 in cobalt-precorrin-5B to form cobalt-precorrin-6A. The polypeptide is Cobalt-precorrin-5B C(1)-methyltransferase (Paraburkholderia phytofirmans (strain DSM 17436 / LMG 22146 / PsJN) (Burkholderia phytofirmans)).